We begin with the raw amino-acid sequence, 103 residues long: Large ribosomal subunit protein bL21 (103 aa).

The protein belongs to the bacterial ribosomal protein bL21 family. Part of the 50S ribosomal subunit. Contacts protein L20.

In terms of biological role, this protein binds to 23S rRNA in the presence of protein L20. This Paraburkholderia phymatum (strain DSM 17167 / CIP 108236 / LMG 21445 / STM815) (Burkholderia phymatum) protein is Large ribosomal subunit protein bL21.